Reading from the N-terminus, the 232-residue chain is 2,3-bisphosphoglycerate-dependent phosphoglycerate mutase (232 aa).

Residues 10–17 (RHGESIWN), 23–24 (TG), Arg62, 89–92 (ERHY), Lys100, 116–117 (RR), and 185–186 (GN) each bind substrate. The Tele-phosphohistidine intermediate role is filled by His11. Residue Glu89 is the Proton donor/acceptor of the active site.

This sequence belongs to the phosphoglycerate mutase family. BPG-dependent PGAM subfamily. As to quaternary structure, homodimer.

It catalyses the reaction (2R)-2-phosphoglycerate = (2R)-3-phosphoglycerate. The protein operates within carbohydrate degradation; glycolysis; pyruvate from D-glyceraldehyde 3-phosphate: step 3/5. Functionally, catalyzes the interconversion of 2-phosphoglycerate and 3-phosphoglycerate. This chain is 2,3-bisphosphoglycerate-dependent phosphoglycerate mutase, found in Buchnera aphidicola subsp. Baizongia pistaciae (strain Bp).